We begin with the raw amino-acid sequence, 306 residues long: D-alanine--D-alanine ligase B (306 aa).

Active-site residues include Glu15 and Ser150. The ATP-grasp domain occupies 101 to 303 (KLLWQGAGLP…FSQLVVRILE (203 aa)). 134–189 (ISALGLPVIVKPSREGSSVGMSKVVAENALQDALRLAFQHDEEVLIEKWLSGPEFT) lines the ATP pocket. 3 residues coordinate Mg(2+): Asp257, Glu270, and Asn272. Ser281 is a catalytic residue.

This sequence belongs to the D-alanine--D-alanine ligase family. In terms of assembly, monomer. Requires Mg(2+) as cofactor. Mn(2+) is required as a cofactor.

It localises to the cytoplasm. It catalyses the reaction 2 D-alanine + ATP = D-alanyl-D-alanine + ADP + phosphate + H(+). It functions in the pathway cell wall biogenesis; peptidoglycan biosynthesis. Cell wall formation. The sequence is that of D-alanine--D-alanine ligase B (ddlB) from Escherichia coli O157:H7.